The chain runs to 286 residues: Bark agglutinin I polypeptide B (286 aa).

Residues M1–S31 form the signal peptide. N-linked (GlcNAc...) asparagine glycosylation is present at N148. The Mn(2+) site is built by E157 and D159. Ca(2+) is bound by residues D159, N163, and D167. Mn(2+)-binding residues include D167 and H172.

The protein belongs to the leguminous lectin family. In terms of assembly, RPbAI is composed of two polypeptides, A and B, that associate into five different tetrameric isolectins. The A4 combination is the only one devoid of agglutination activity. Isoform B4 displays maximal agglutination activity. As to expression, mostly in the axial and ray parenchymal cells of the inner bark. Fewer in the axial and ray parenchymal cells of the xylem. Strong expression in bark. The lectin accumulates in the inner bark in autumn and winter and disappears in may.

Its function is as follows. Bark lectins are storage proteins that probably maintain stocks of nitrogen during dormant period. Self-aggregatable molecules that can bind their own carbohydrate side chains. They could also play a role in the plant's defense against phytophagous invertebrates or herbivorous higher animals. This is Bark agglutinin I polypeptide B from Robinia pseudoacacia (Black locust).